Here is a 148-residue protein sequence, read N- to C-terminus: uncharacterized protein (148 aa).

Positions methionine 1 to proline 11 are enriched in polar residues. The interval methionine 1 to valine 31 is disordered. Residues glutamine 19–serine 30 are compositionally biased toward basic and acidic residues.

This is an uncharacterized protein from Escherichia coli (strain K12).